Consider the following 325-residue polypeptide: GMP reductase (325 aa).

The active-site Thioimidate intermediate is the Cys174. Residue 203-226 participates in NADP(+) binding; it reads LIADGGIRTHGDIAKSIRFGATMV.

Belongs to the IMPDH/GMPR family. GuaC type 2 subfamily.

It carries out the reaction IMP + NH4(+) + NADP(+) = GMP + NADPH + 2 H(+). Functionally, catalyzes the irreversible NADPH-dependent deamination of GMP to IMP. It functions in the conversion of nucleobase, nucleoside and nucleotide derivatives of G to A nucleotides, and in maintaining the intracellular balance of A and G nucleotides. In Pediococcus pentosaceus (strain ATCC 25745 / CCUG 21536 / LMG 10740 / 183-1w), this protein is GMP reductase.